Here is a 356-residue protein sequence, read N- to C-terminus: Chavicol O-methyltransferase (356 aa).

5 residues coordinate S-adenosyl-L-methionine: Gly-202, Asp-225, Asp-245, Met-246, and Lys-259. The Proton acceptor role is filled by His-263.

It belongs to the class I-like SAM-binding methyltransferase superfamily. Cation-independent O-methyltransferase family. COMT subfamily. In terms of assembly, homodimer. In terms of tissue distribution, specifically expressed in the peltate glandular trichomes on the surface of the young basil leaves.

The catalysed reaction is (E)-isoeugenol + S-adenosyl-L-methionine = (E)-isomethyleugenol + S-adenosyl-L-homocysteine + H(+). Its pathway is aromatic compound metabolism; phenylpropanoid biosynthesis. In terms of biological role, phenylpropene O-methyltransferase that catalyzes the methylation of the para-4-hydroxyl of chavicol to methylchavicol. Can also convert eugenol to methyleugenol but with less affinity. This is Chavicol O-methyltransferase (CVOMT1) from Ocimum basilicum (Sweet basil).